Here is a 217-residue protein sequence, read N- to C-terminus: Homologous-pairing protein 2 homolog (217 aa).

An interaction with NR3C1, homodimerization and transcriptional activation almost abolished when missing region spans residues leucine 89–leucine 117. The stretch at isoleucine 93–histidine 153 forms a coiled coil. The segment at threonine 118 to glutamate 182 is DNA-binding. The interaction with NR3C1 decreased when missing stretch occupies residues threonine 118–glutamate 182.

Belongs to the HOP2 family. Forms a stable heterodimer with MND1. Interacts with PSMC3/TBP1. Interacts with the DNA-binding domain of the nuclear receptors NR3C1/GR, ESR2/ER-beta, THRB and RXRA. Phosphorylated by PKA, PKC and MAPK.

Its subcellular location is the nucleus. Plays an important role in meiotic recombination. Stimulates DMC1-mediated strand exchange required for pairing homologous chromosomes during meiosis. The complex PSMC3IP/MND1 binds DNA, stimulates the recombinase activity of DMC1 as well as DMC1 D-loop formation from double-strand DNA. This complex stabilizes presynaptic RAD51 and DMC1 filaments formed on single strand DNA to capture double-strand DNA. This complex stimulates both synaptic and presynaptic critical steps in RAD51 and DMC1-promoted homologous pairing. May inhibit HIV-1 viral protein TAT activity and modulate the activity of proteasomes through association with PSMC3. Plays a role as a coactivator in nuclear receptor-mediated transcription. The sequence is that of Homologous-pairing protein 2 homolog (Psmc3ip) from Rattus norvegicus (Rat).